The primary structure comprises 289 residues: ATP synthase gamma chain (289 aa).

This sequence belongs to the ATPase gamma chain family. F-type ATPases have 2 components, CF(1) - the catalytic core - and CF(0) - the membrane proton channel. CF(1) has five subunits: alpha(3), beta(3), gamma(1), delta(1), epsilon(1). CF(0) has three main subunits: a, b and c.

It is found in the cell inner membrane. Its function is as follows. Produces ATP from ADP in the presence of a proton gradient across the membrane. The gamma chain is believed to be important in regulating ATPase activity and the flow of protons through the CF(0) complex. In Anaeromyxobacter dehalogenans (strain 2CP-C), this protein is ATP synthase gamma chain.